The chain runs to 510 residues: ATP synthase subunit alpha (510 aa).

169 to 176 serves as a coordination point for ATP; that stretch reads GDRQTGKT.

The protein belongs to the ATPase alpha/beta chains family. F-type ATPases have 2 components, CF(1) - the catalytic core - and CF(0) - the membrane proton channel. CF(1) has five subunits: alpha(3), beta(3), gamma(1), delta(1), epsilon(1). CF(0) has four main subunits: a(1), b(1), b'(1) and c(9-12).

The protein localises to the cell inner membrane. The enzyme catalyses ATP + H2O + 4 H(+)(in) = ADP + phosphate + 5 H(+)(out). Produces ATP from ADP in the presence of a proton gradient across the membrane. The alpha chain is a regulatory subunit. The protein is ATP synthase subunit alpha of Rhodopseudomonas palustris (strain BisA53).